Reading from the N-terminus, the 252-residue chain is 5'-nucleotidase SurE (252 aa).

The a divalent metal cation site is built by D8, D9, S42, and N94.

It belongs to the SurE nucleotidase family. Requires a divalent metal cation as cofactor.

It is found in the cytoplasm. The catalysed reaction is a ribonucleoside 5'-phosphate + H2O = a ribonucleoside + phosphate. Nucleotidase that shows phosphatase activity on nucleoside 5'-monophosphates. This chain is 5'-nucleotidase SurE, found in Ehrlichia ruminantium (strain Welgevonden).